We begin with the raw amino-acid sequence, 306 residues long: D-alanine--D-alanine ligase (306 aa).

An ATP-grasp domain is found at 102–300 (KIIAASAGVS…YGDIVKWIVE (199 aa)). An ATP-binding site is contributed by 128-183 (PMKPPYVIKPIREGSSFGVVIVGSDETMPLHDIMNNEWVYDDEIMVEKYVPGRELT). Mg(2+) contacts are provided by Asp253, Glu267, and Asn269.

The protein belongs to the D-alanine--D-alanine ligase family. Mg(2+) serves as cofactor. Requires Mn(2+) as cofactor.

It is found in the cytoplasm. It catalyses the reaction 2 D-alanine + ATP = D-alanyl-D-alanine + ADP + phosphate + H(+). It functions in the pathway cell wall biogenesis; peptidoglycan biosynthesis. Cell wall formation. The chain is D-alanine--D-alanine ligase from Bartonella bacilliformis (strain ATCC 35685 / KC583 / Herrer 020/F12,63).